The primary structure comprises 663 residues: Oxytetracycline resistance protein (663 aa).

Positions 1–252 constitute a tr-type G domain; that stretch reads MNKLNLGILA…GIRELLPSVH (252 aa). GTP-binding positions include 10-17, 74-78, and 128-131; these read AHVDAGKT, DTPGH, and NKID.

It belongs to the TRAFAC class translation factor GTPase superfamily. Classic translation factor GTPase family. TetM/TetO subfamily.

Functionally, abolishes the inhibitory effect of oxytetracycline on protein synthesis by a non-covalent modification of the ribosomes. This is Oxytetracycline resistance protein (otrA) from Streptomyces rimosus.